Reading from the N-terminus, the 288-residue chain is Probable ketoamine kinase VC_1539 (288 aa).

92–94 (NYL) is a binding site for ATP. Asp195 serves as the catalytic Proton acceptor.

The protein belongs to the fructosamine kinase family.

Functionally, ketoamine kinase that phosphorylates ketoamines on the third carbon of the sugar moiety to generate ketoamine 3-phosphate. The sequence is that of Probable ketoamine kinase VC_1539 from Vibrio cholerae serotype O1 (strain ATCC 39315 / El Tor Inaba N16961).